We begin with the raw amino-acid sequence, 342 residues long: Heat-inducible transcription repressor HrcA (342 aa).

This sequence belongs to the HrcA family.

Negative regulator of class I heat shock genes (grpE-dnaK-dnaJ and groELS operons). Prevents heat-shock induction of these operons. This is Heat-inducible transcription repressor HrcA from Leptospira interrogans serogroup Icterohaemorrhagiae serovar copenhageni (strain Fiocruz L1-130).